A 24-amino-acid polypeptide reads, in one-letter code: LLKELWTKIKGAGKAVLGKIKGLL.

At leucine 24 the chain carries Leucine amide.

Expressed by the venom gland.

The protein localises to the secreted. In terms of biological role, has a broad spectrum of activity against both Gram-positive and Gram-negative bacteria. Is inactive against yeast, erythrocytes, and insects. This chain is M-poneritoxin-Ng2b, found in Neoponera goeldii (Ponerine ant).